The following is a 122-amino-acid chain: Large ribosomal subunit protein uL14 (122 aa).

It belongs to the universal ribosomal protein uL14 family. As to quaternary structure, part of the 50S ribosomal subunit. Forms a cluster with proteins L3 and L19. In the 70S ribosome, L14 and L19 interact and together make contacts with the 16S rRNA in bridges B5 and B8.

Binds to 23S rRNA. Forms part of two intersubunit bridges in the 70S ribosome. This chain is Large ribosomal subunit protein uL14, found in Neisseria meningitidis serogroup C (strain 053442).